Here is a 186-residue protein sequence, read N- to C-terminus: Ribosome-recycling factor (186 aa).

Belongs to the RRF family.

It is found in the cytoplasm. Functionally, responsible for the release of ribosomes from messenger RNA at the termination of protein biosynthesis. May increase the efficiency of translation by recycling ribosomes from one round of translation to another. The sequence is that of Ribosome-recycling factor from Bartonella tribocorum (strain CIP 105476 / IBS 506).